The sequence spans 565 residues: Formate--tetrahydrofolate ligase (565 aa).

65 to 72 (TPAGEGKT) contributes to the ATP binding site.

This sequence belongs to the formate--tetrahydrofolate ligase family.

The enzyme catalyses (6S)-5,6,7,8-tetrahydrofolate + formate + ATP = (6R)-10-formyltetrahydrofolate + ADP + phosphate. Its pathway is one-carbon metabolism; tetrahydrofolate interconversion. This Syntrophus aciditrophicus (strain SB) protein is Formate--tetrahydrofolate ligase.